The following is a 324-amino-acid chain: Integrin-binding sialoprotein (324 aa).

An N-terminal signal peptide occupies residues 1–16 (MKTALILLSILGMACA). Phosphoserine occurs at positions 31, 67, 75, 76, and 95. Disordered regions lie at residues 60–228 (VQGG…GREL) and 243–263 (QQTT…RKSS). Positions 66 to 105 (SSEENGDGDSSEEEGEEEETSNEEENNEDSEGNEDQEAEA) are enriched in acidic residues. Over residues 106–130 (ENSTLSTLSGVTASYGAETTPQAQT) the composition is skewed to polar residues. Asn107 is a glycosylation site (N-linked (GlcNAc...) asparagine). Residues 141 to 154 (KAGDAESRAPKVKE) are compositionally biased toward basic and acidic residues. Ser155 bears the Phosphoserine mark. Residues 155 to 179 (SDEEEEEEEEEEENENEEAEVDENE) are compositionally biased toward acidic residues. Residues Asn183, Asn188, and Asn196 are each glycosylated (N-linked (GlcNAc...) asparagine). Residues 203–213 (NGEEAEAEEAS) are compositionally biased toward acidic residues. Over residues 253–263 (GTTSPPIRKSS) the composition is skewed to polar residues. The Integrin-binding motif motif lies at 293–295 (RGD). Residues Tyr320 and Tyr321 each carry the sulfotyrosine modification.

As to quaternary structure, monomer. Interacts with integrins; the interaction promotes cell adhesion.

It is found in the secreted. Functionally, binds tightly to hydroxyapatite. Appears to form an integral part of the mineralized matrix. Probably important to cell-matrix interaction. Promotes adhesion and migration of various cells via the alpha-V/beta-3 integrin receptor (ITGAV:ITGB3). This chain is Integrin-binding sialoprotein (Ibsp), found in Mus musculus (Mouse).